Reading from the N-terminus, the 209-residue chain is Uridine kinase (209 aa).

12–19 (GGSASGKT) lines the ATP pocket.

The protein belongs to the uridine kinase family.

The protein localises to the cytoplasm. The enzyme catalyses uridine + ATP = UMP + ADP + H(+). It carries out the reaction cytidine + ATP = CMP + ADP + H(+). It participates in pyrimidine metabolism; CTP biosynthesis via salvage pathway; CTP from cytidine: step 1/3. Its pathway is pyrimidine metabolism; UMP biosynthesis via salvage pathway; UMP from uridine: step 1/1. The chain is Uridine kinase from Chloroflexus aggregans (strain MD-66 / DSM 9485).